We begin with the raw amino-acid sequence, 727 residues long: MKTQGLELETVIDIKHKPVSFTGGLEFESLTYTVTKKKKVDGKWSNEDVDLLHDITGYAPKGCITAVMGPSGAGKSTLLDGLAGRIASGSLKGKVSLDGNSVNASLIKRTSAYIMQEDRLFPMLTVYETLMFAADFRLGPLSAVDKRQRVEKLIEQLGLSSSRNTYIGDEGTRGVSGGERRRVSIGVDIIHGPSLLFLDEPTSGLDSTSALSVIEKLHDIARNGSTVILTIHQPSSRIQLLLDHLIILARGQLMFQGSLKDVGHHLNRMGRKIPKGENPIENLIDVIQEYDQCDFVGVEVLAEFARTGMKPPLLSDMEEIISYTNSIAPSPSPLHRGSKYEEKSQDFSYSSQISRRSLNDEFDHSIRSPYNNTPMSWSASNSAAFLKFTPSRLKNENKVQKPPSHASPGIYTYSSEILPATPTPHSSDYVVDENDYLTPTNSSQEHLGPKFANSYIGETWILMRRNFTNIRRTPELFLSRLMVLTFMGVMMATMFHNPKNTLQGITNRLSFFIFTVCLFFFSSNDAVPAFIQERFIFIRETSHNAYRASCYTIASLITHMPFLALQALAYAAIVWFALELRGPFIYFFLVLFISLLSTNSFVVFVSSIVPNYILGYAAVIAFTALFFLFCGYFLSSEDIPLYWRWMNKVSTMTYPYEGLLMNEYQTNETFGSNDGVSITGFDILKSLHIGTEEIKKRNNVLIMLGWAVLYRILFYIILRFASKNQRS.

Topologically, residues 1–475 (MKTQGLELET…NFTNIRRTPE (475 aa)) are cytoplasmic. The ABC transporter domain maps to 25–275 (LEFESLTYTV…LNRMGRKIPK (251 aa)). Position 69 to 76 (69 to 76 (GPSGAGKS)) interacts with ATP. Residues 476–496 (LFLSRLMVLTFMGVMMATMFH) form a helical membrane-spanning segment. Topologically, residues 497–510 (NPKNTLQGITNRLS) are extracellular. The helical transmembrane segment at 511–531 (FFIFTVCLFFFSSNDAVPAFI) threads the bilayer. Over 532–559 (QERFIFIRETSHNAYRASCYTIASLITH) the chain is Cytoplasmic. A helical transmembrane segment spans residues 560–580 (MPFLALQALAYAAIVWFALEL). Over 581–583 (RGP) the chain is Extracellular. Residues 584 to 604 (FIYFFLVLFISLLSTNSFVVF) traverse the membrane as a helical segment. The Cytoplasmic segment spans residues 605 to 612 (VSSIVPNY). The chain crosses the membrane as a helical span at residues 613–633 (ILGYAAVIAFTALFFLFCGYF). At 634–699 (LSSEDIPLYW…GTEEIKKRNN (66 aa)) the chain is on the extracellular side. N-linked (GlcNAc...) asparagine glycosylation occurs at N667. A helical membrane pass occupies residues 700–720 (VLIMLGWAVLYRILFYIILRF). At 721-727 (ASKNQRS) the chain is on the cytoplasmic side.

This sequence belongs to the ABC transporter superfamily. ABCG family. Stunted arbuscule (STR) subfamily. Heterodimerizes with STR; the resulting transporter is located in the peri-arbuscular membrane. As to expression, expressed constitutively in the vascular tissue of roots.

The protein resides in the cell membrane. In terms of biological role, together with STR, required for arbuscule development in arbuscular mycorrhizal symbiosis. The sequence is that of ABC transporter G family member STR2 from Medicago truncatula (Barrel medic).